We begin with the raw amino-acid sequence, 264 residues long: Glutamate racemase (264 aa).

Substrate contacts are provided by residues 12–13 and 44–45; these read DS and YG. Cys-76 serves as the catalytic Proton donor/acceptor. 77–78 is a substrate binding site; the sequence is NT. Cys-186 (proton donor/acceptor) is an active-site residue. Residue 187-188 coordinates substrate; the sequence is TH.

It belongs to the aspartate/glutamate racemases family.

The enzyme catalyses L-glutamate = D-glutamate. The protein operates within cell wall biogenesis; peptidoglycan biosynthesis. Provides the (R)-glutamate required for cell wall biosynthesis. The chain is Glutamate racemase from Fusobacterium nucleatum subsp. nucleatum (strain ATCC 25586 / DSM 15643 / BCRC 10681 / CIP 101130 / JCM 8532 / KCTC 2640 / LMG 13131 / VPI 4355).